Here is a 393-residue protein sequence, read N- to C-terminus: MFAFVRFLEDNVCYALPATRVREFHPHSTEDFDSRRVYAVYRSLEEEAGFPGAPQQAQILALAENKTDLENRVMQKKIKIPKISLNYSEQPWEYKDYEDEEDSEFRHFKRADGRKQVESPHKSIEAVVARLEKQSFIGPSHNTRCDEVFSEPFHSVGHMDRLEAAVVPRVLYEELLRSYQQQQQEMKHIQHELERTRKQLVQQAKKLKDYGSLVTEVKELRVLNRRLQDVLLLRLGSGPTIELQIDKSDYCDPEPEPEPEPEIQKISNEEVHLGSGVWVNEEKWHQLQATQGDSKYTKNLAVMIWGTDVLKNRSVTGVATKKKKDAVPKPPLSPHKLSVVRECMYDRIARETMDENEIAQRLSKVNKYICEKIMDINKSCKNEERREAKYNVQ.

The stretch at 169–212 forms a coiled coil; that stretch reads RVLYEELLRSYQQQQQEMKHIQHELERTRKQLVQQAKKLKDYGS. In terms of domain architecture, BEN spans 274-380; the sequence is GSGVWVNEEK…EKIMDINKSC (107 aa).

In terms of biological role, may act as a transcriptional repressor. In Xenopus laevis (African clawed frog), this protein is BEN domain-containing protein 5 (bend5).